A 224-amino-acid chain; its full sequence is MADS-box transcription factor 16 (224 aa).

An MADS-box domain is found at Met-1–Ser-61. The K-box domain occupies Tyr-84–Pro-174.

May interact with the K-box of MADS4, MADS6 and MADS8. May form a heterodimer with MADS4. As to expression, expressed in lodicules, stamens and carpels.

It is found in the nucleus. Probable transcription factor involved in the development of floral organs. Required for normal development of lodicules and stamens (whorls 2 and 3). May function as a heterodimer with MADS4. The protein is MADS-box transcription factor 16 (MADS16) of Oryza sativa subsp. japonica (Rice).